The following is a 287-amino-acid chain: Glycine--tRNA ligase alpha subunit (287 aa).

The protein belongs to the class-II aminoacyl-tRNA synthetase family. Tetramer of two alpha and two beta subunits.

It localises to the cytoplasm. It catalyses the reaction tRNA(Gly) + glycine + ATP = glycyl-tRNA(Gly) + AMP + diphosphate. The sequence is that of Glycine--tRNA ligase alpha subunit from Campylobacter jejuni subsp. jejuni serotype O:23/36 (strain 81-176).